Reading from the N-terminus, the 648-residue chain is DNA gyrase subunit B (648 aa).

The region spanning 427 to 541 (TELFIVEGDS…AGYVYIAQPP (115 aa)) is the Toprim domain. Mg(2+) contacts are provided by glutamate 433, aspartate 506, and aspartate 508.

Belongs to the type II topoisomerase GyrB family. In terms of assembly, heterotetramer, composed of two GyrA and two GyrB chains. In the heterotetramer, GyrA contains the active site tyrosine that forms a transient covalent intermediate with DNA, while GyrB binds cofactors and catalyzes ATP hydrolysis. Mg(2+) serves as cofactor. It depends on Mn(2+) as a cofactor. Requires Ca(2+) as cofactor.

The protein localises to the cytoplasm. It carries out the reaction ATP-dependent breakage, passage and rejoining of double-stranded DNA.. A type II topoisomerase that negatively supercoils closed circular double-stranded (ds) DNA in an ATP-dependent manner to modulate DNA topology and maintain chromosomes in an underwound state. Negative supercoiling favors strand separation, and DNA replication, transcription, recombination and repair, all of which involve strand separation. Also able to catalyze the interconversion of other topological isomers of dsDNA rings, including catenanes and knotted rings. Type II topoisomerases break and join 2 DNA strands simultaneously in an ATP-dependent manner. This Streptococcus pneumoniae serotype 4 (strain ATCC BAA-334 / TIGR4) protein is DNA gyrase subunit B.